The following is a 90-amino-acid chain: Transcriptional repressor SdpR (90 aa).

The 87-residue stretch at 1–87 (MNNVFKAISD…WMLNFINKGD (87 aa)) folds into the HTH arsR-type domain. The H-T-H motif DNA-binding region spans 39 to 62 (PSISHHLNILKQAEVISDHRKGQF).

The protein resides in the cytoplasm. Its function is as follows. Represses the transcription of the sdpIR operon and of several other operons that probably contribute to delaying commitment to sporulation. This chain is Transcriptional repressor SdpR (sdpR), found in Bacillus subtilis (strain 168).